The chain runs to 419 residues: Tryptophan synthase beta chain (419 aa).

N6-(pyridoxal phosphate)lysine is present on K113.

The protein belongs to the TrpB family. As to quaternary structure, tetramer of two alpha and two beta chains. It depends on pyridoxal 5'-phosphate as a cofactor.

The catalysed reaction is (1S,2R)-1-C-(indol-3-yl)glycerol 3-phosphate + L-serine = D-glyceraldehyde 3-phosphate + L-tryptophan + H2O. Its pathway is amino-acid biosynthesis; L-tryptophan biosynthesis; L-tryptophan from chorismate: step 5/5. The beta subunit is responsible for the synthesis of L-tryptophan from indole and L-serine. The protein is Tryptophan synthase beta chain of Picrophilus torridus (strain ATCC 700027 / DSM 9790 / JCM 10055 / NBRC 100828 / KAW 2/3).